A 282-amino-acid chain; its full sequence is tRNA (guanine-N(1)-)-methyltransferase (282 aa).

A disordered region spans residues 77 to 114 (TGPAATVSDLESSAEHKRNLRPATTNGDAEPLGEKAGG). Residues Gly-149 and 173 to 178 (IGDYVL) each bind S-adenosyl-L-methionine.

The protein belongs to the RNA methyltransferase TrmD family. In terms of assembly, homodimer.

The protein localises to the cytoplasm. The catalysed reaction is guanosine(37) in tRNA + S-adenosyl-L-methionine = N(1)-methylguanosine(37) in tRNA + S-adenosyl-L-homocysteine + H(+). Functionally, specifically methylates guanosine-37 in various tRNAs. The polypeptide is tRNA (guanine-N(1)-)-methyltransferase (Corynebacterium jeikeium (strain K411)).